Reading from the N-terminus, the 61-residue chain is Large ribosomal subunit protein uL30 (61 aa).

This sequence belongs to the universal ribosomal protein uL30 family. As to quaternary structure, part of the 50S ribosomal subunit.

The chain is Large ribosomal subunit protein uL30 from Nitrosomonas europaea (strain ATCC 19718 / CIP 103999 / KCTC 2705 / NBRC 14298).